Consider the following 1087-residue polypeptide: Exportin-7-B (1087 aa).

Residues 30–96 (AEKALVEFTN…RNYVLTYLAT (67 aa)) enclose the Importin N-terminal domain.

The protein belongs to the exportin family.

The protein localises to the cytoplasm. The protein resides in the nucleus. Mediates the nuclear export of proteins (cargos) with broad substrate specificity. The sequence is that of Exportin-7-B (xpo7-b) from Xenopus laevis (African clawed frog).